Here is a 1390-residue protein sequence, read N- to C-terminus: DNA-directed RNA polymerase subunit beta (1390 aa).

It belongs to the RNA polymerase beta chain family. In terms of assembly, the RNAP catalytic core consists of 2 alpha, 1 beta, 1 beta' and 1 omega subunit. When a sigma factor is associated with the core the holoenzyme is formed, which can initiate transcription.

It catalyses the reaction RNA(n) + a ribonucleoside 5'-triphosphate = RNA(n+1) + diphosphate. Functionally, DNA-dependent RNA polymerase catalyzes the transcription of DNA into RNA using the four ribonucleoside triphosphates as substrates. This Gluconobacter oxydans (strain 621H) (Gluconobacter suboxydans) protein is DNA-directed RNA polymerase subunit beta.